The chain runs to 498 residues: ATP synthase subunit beta, chloroplastic (498 aa).

Residue 172-179 participates in ATP binding; the sequence is GGAGVGKT.

It belongs to the ATPase alpha/beta chains family. F-type ATPases have 2 components, CF(1) - the catalytic core - and CF(0) - the membrane proton channel. CF(1) has five subunits: alpha(3), beta(3), gamma(1), delta(1), epsilon(1). CF(0) has four main subunits: a(1), b(1), b'(1) and c(9-12).

The protein localises to the plastid. It localises to the chloroplast thylakoid membrane. It catalyses the reaction ATP + H2O + 4 H(+)(in) = ADP + phosphate + 5 H(+)(out). Produces ATP from ADP in the presence of a proton gradient across the membrane. The catalytic sites are hosted primarily by the beta subunits. In Calycanthus floridus var. glaucus (Eastern sweetshrub), this protein is ATP synthase subunit beta, chloroplastic.